Reading from the N-terminus, the 410-residue chain is S-adenosylmethionine synthase (410 aa).

Position 21 (His21) interacts with ATP. Residue Asp23 coordinates Mg(2+). Glu49 is a K(+) binding site. 2 residues coordinate L-methionine: Glu62 and Gln105. Residues 105–115 form a flexible loop region; the sequence is QSQEIGAGVDQ. The tract at residues 107-133 is disordered; it reads QEIGAGVDQSHEVRSGENTDADDQAGA. Residues 180 to 182, Asp261, 267 to 268, Ala284, and Lys288 each bind ATP; these read DGK and RK. Asp261 is an L-methionine binding site. Lys292 contacts L-methionine.

It belongs to the AdoMet synthase family. In terms of assembly, homotetramer; dimer of dimers. The cofactor is Mg(2+). K(+) serves as cofactor.

It localises to the cytoplasm. The catalysed reaction is L-methionine + ATP + H2O = S-adenosyl-L-methionine + phosphate + diphosphate. It participates in amino-acid biosynthesis; S-adenosyl-L-methionine biosynthesis; S-adenosyl-L-methionine from L-methionine: step 1/1. Its function is as follows. Catalyzes the formation of S-adenosylmethionine (AdoMet) from methionine and ATP. The overall synthetic reaction is composed of two sequential steps, AdoMet formation and the subsequent tripolyphosphate hydrolysis which occurs prior to release of AdoMet from the enzyme. The chain is S-adenosylmethionine synthase from Corynebacterium diphtheriae (strain ATCC 700971 / NCTC 13129 / Biotype gravis).